We begin with the raw amino-acid sequence, 501 residues long: Type B diterpene cyclase (501 aa).

It belongs to the terpene synthase family. Monomer. It depends on Mg(2+) as a cofactor.

It catalyses the reaction geranylgeranyl diphosphate = tuberculosinyl diphosphate. With respect to regulation, strongly inhibited by 15-aza-dihydrogeranylgeraniol and 5-isopropyl-N,N,N,2-tetramethyl-4-(piperidine-1-carbonyloxy)benzenaminium chloride (Amo-1618). Inhibited by GGPP concentrations higher than 50 uM. Its function is as follows. Catalyzes the formation of tuberculosinyl diphosphate from geranylgeranyl diphosphate (GGPP). It could also react with (14R/S)-14,15-oxidoGGPP to generate 3alpha- and 3beta-hydroxytuberculosinyl diphosphate. In Mycobacterium tuberculosis (strain ATCC 25618 / H37Rv), this protein is Type B diterpene cyclase.